We begin with the raw amino-acid sequence, 470 residues long: Argininosuccinate lyase (470 aa).

Belongs to the lyase 1 family. Argininosuccinate lyase subfamily.

It is found in the cytoplasm. The enzyme catalyses 2-(N(omega)-L-arginino)succinate = fumarate + L-arginine. It participates in amino-acid biosynthesis; L-arginine biosynthesis; L-arginine from L-ornithine and carbamoyl phosphate: step 3/3. In Leptospira interrogans serogroup Icterohaemorrhagiae serovar copenhageni (strain Fiocruz L1-130), this protein is Argininosuccinate lyase.